We begin with the raw amino-acid sequence, 204 residues long: MLRSRRLALLCLATPLWLAACASVTPTRGFDASETAASQLYTGRFSANYVRYGRNEGVQGSFRWQEQGRNVRLDLVSPLGQTLAIVTATPSGATLDLPNEAPRNAPEVDSLMEQALGFSLPVSGMRDWLHGRAAPGTPSNVTRDANGRPDTLRQSGWTVRYLAWQDTPENATPTTTLPRRIDMARDGNESPLSVRLVIDPENKE.

A signal peptide spans 1–20; the sequence is MLRSRRLALLCLATPLWLAA. A lipid anchor (N-palmitoyl cysteine) is attached at Cys21. Cys21 is lipidated: S-diacylglycerol cysteine. The interval 131 to 150 is disordered; it reads GRAAPGTPSNVTRDANGRPD.

Belongs to the LolB family. As to quaternary structure, monomer.

The protein localises to the cell outer membrane. Functionally, plays a critical role in the incorporation of lipoproteins in the outer membrane after they are released by the LolA protein. This chain is Outer-membrane lipoprotein LolB, found in Cupriavidus metallidurans (strain ATCC 43123 / DSM 2839 / NBRC 102507 / CH34) (Ralstonia metallidurans).